A 496-amino-acid polypeptide reads, in one-letter code: Ribose import ATP-binding protein RbsA (496 aa).

2 consecutive ABC transporter domains span residues isoleucine 5–serine 242 and serine 252–glutamate 496. Position 37–44 (glycine 37–serine 44) interacts with ATP.

It belongs to the ABC transporter superfamily. Ribose importer (TC 3.A.1.2.1) family. In terms of assembly, the complex is composed of an ATP-binding protein (RbsA), two transmembrane proteins (RbsC) and a solute-binding protein (RbsB).

It is found in the cell membrane. It catalyses the reaction D-ribose(out) + ATP + H2O = D-ribose(in) + ADP + phosphate + H(+). In terms of biological role, part of the ABC transporter complex RbsABC involved in ribose import. Responsible for energy coupling to the transport system. In Bacillus cereus (strain ATCC 14579 / DSM 31 / CCUG 7414 / JCM 2152 / NBRC 15305 / NCIMB 9373 / NCTC 2599 / NRRL B-3711), this protein is Ribose import ATP-binding protein RbsA.